Here is a 55-residue protein sequence, read N- to C-terminus: Large ribosomal subunit protein bL32c (55 aa).

It belongs to the bacterial ribosomal protein bL32 family.

The protein localises to the plastid. It is found in the chloroplast. This Atropa belladonna (Belladonna) protein is Large ribosomal subunit protein bL32c.